The sequence spans 488 residues: UDP-N-acetylmuramate--L-alanine ligase (488 aa).

Position 129 to 135 (129 to 135 (GTHGKTT)) interacts with ATP.

Belongs to the MurCDEF family.

Its subcellular location is the cytoplasm. The enzyme catalyses UDP-N-acetyl-alpha-D-muramate + L-alanine + ATP = UDP-N-acetyl-alpha-D-muramoyl-L-alanine + ADP + phosphate + H(+). Its pathway is cell wall biogenesis; peptidoglycan biosynthesis. Functionally, cell wall formation. The polypeptide is UDP-N-acetylmuramate--L-alanine ligase (Chromohalobacter salexigens (strain ATCC BAA-138 / DSM 3043 / CIP 106854 / NCIMB 13768 / 1H11)).